We begin with the raw amino-acid sequence, 179 residues long: Inosine/xanthosine triphosphatase (179 aa).

Mg(2+) is bound at residue Glu-71. Residue 71–72 (EA) participates in substrate binding.

Belongs to the YjjX NTPase family. In terms of assembly, homodimer. It depends on Mg(2+) as a cofactor. Mn(2+) is required as a cofactor.

It carries out the reaction XTP + H2O = XDP + phosphate + H(+). The enzyme catalyses ITP + H2O = IDP + phosphate + H(+). In terms of biological role, phosphatase that hydrolyzes non-canonical purine nucleotides such as XTP and ITP to their respective diphosphate derivatives. Probably excludes non-canonical purines from DNA/RNA precursor pool, thus preventing their incorporation into DNA/RNA and avoiding chromosomal lesions. This chain is Inosine/xanthosine triphosphatase, found in Shewanella sp. (strain ANA-3).